The primary structure comprises 137 residues: Nucleoside diphosphate kinase (137 aa).

The ATP site is built by K9, F57, R85, T91, R102, and N112. Residue H115 is the Pros-phosphohistidine intermediate of the active site.

The protein belongs to the NDK family. In terms of assembly, homotetramer. Mg(2+) serves as cofactor.

The protein localises to the cytoplasm. It catalyses the reaction a 2'-deoxyribonucleoside 5'-diphosphate + ATP = a 2'-deoxyribonucleoside 5'-triphosphate + ADP. It carries out the reaction a ribonucleoside 5'-diphosphate + ATP = a ribonucleoside 5'-triphosphate + ADP. Functionally, major role in the synthesis of nucleoside triphosphates other than ATP. The ATP gamma phosphate is transferred to the NDP beta phosphate via a ping-pong mechanism, using a phosphorylated active-site intermediate. This Nitratiruptor sp. (strain SB155-2) protein is Nucleoside diphosphate kinase.